The following is a 142-amino-acid chain: MAKKITRIAKLEFMAMQAKPGAELASLGINMPAFTREFNDATKDRAGDVVPVVITAYDDKSFDFVLKTTPAAYMLKKVAKIEKGASNSKTQTVATVTLDDIRSIAEYKMPDLNANTIEAAMKQIIGTAKNMGIKVTGMEDFK.

This sequence belongs to the universal ribosomal protein uL11 family. Part of the ribosomal stalk of the 50S ribosomal subunit. Interacts with L10 and the large rRNA to form the base of the stalk. L10 forms an elongated spine to which L12 dimers bind in a sequential fashion forming a multimeric L10(L12)X complex. Post-translationally, one or more lysine residues are methylated.

In terms of biological role, forms part of the ribosomal stalk which helps the ribosome interact with GTP-bound translation factors. This Mycoplasma capricolum subsp. capricolum (strain California kid / ATCC 27343 / NCTC 10154) protein is Large ribosomal subunit protein uL11.